The following is a 62-amino-acid chain: DNA-directed RNA polymerase subunit omega (62 aa).

Belongs to the RNA polymerase subunit omega family. The RNAP catalytic core consists of 2 alpha, 1 beta, 1 beta' and 1 omega subunit. When a sigma factor is associated with the core the holoenzyme is formed, which can initiate transcription.

It carries out the reaction RNA(n) + a ribonucleoside 5'-triphosphate = RNA(n+1) + diphosphate. Its function is as follows. Promotes RNA polymerase assembly. Latches the N- and C-terminal regions of the beta' subunit thereby facilitating its interaction with the beta and alpha subunits. This Wigglesworthia glossinidia brevipalpis protein is DNA-directed RNA polymerase subunit omega.